The following is a 123-amino-acid chain: Ribosome-binding factor A (123 aa).

It belongs to the RbfA family. As to quaternary structure, monomer. Binds 30S ribosomal subunits, but not 50S ribosomal subunits or 70S ribosomes.

Its subcellular location is the cytoplasm. Functionally, one of several proteins that assist in the late maturation steps of the functional core of the 30S ribosomal subunit. Associates with free 30S ribosomal subunits (but not with 30S subunits that are part of 70S ribosomes or polysomes). Required for efficient processing of 16S rRNA. May interact with the 5'-terminal helix region of 16S rRNA. The sequence is that of Ribosome-binding factor A from Cupriavidus taiwanensis (strain DSM 17343 / BCRC 17206 / CCUG 44338 / CIP 107171 / LMG 19424 / R1) (Ralstonia taiwanensis (strain LMG 19424)).